The primary structure comprises 861 residues: DNA mismatch repair protein MutS (861 aa).

An ATP-binding site is contributed by 616–623; sequence GPNMGGKS.

It belongs to the DNA mismatch repair MutS family.

Its function is as follows. This protein is involved in the repair of mismatches in DNA. It is possible that it carries out the mismatch recognition step. This protein has a weak ATPase activity. This chain is DNA mismatch repair protein MutS, found in Haemophilus influenzae (strain 86-028NP).